Here is a 1218-residue protein sequence, read N- to C-terminus: MMPATRRSASVLVSARGSAARFPASSVSFLHKGAADVCRRFSASLSPFSCSAFVSPSCPMASSSPFSPPLFSSLVSSPSSPSAGFPRSASSSASSAPPCSSAGVSKVSCLKLSCGERQQEGEPSLPRSAEERKATNRRELECLRALQSAVAEREAEADGGWTTWRGVSQRTWKQKRPALLSSRVTAAMSLEEEDSTSGPRGYEEERERRSGVCGERGQNGGEKLGRVQGVSTGDSESRTRCRRGLHFSPQTNRSFVVLLSCLLFFLVGEVQEVCLPSLQRMESSTDFFFFKIASAEAHTANPGDSSKSRRRSPRSSRFTSKASSDSSSSSRSSADSSSSSRSSADSSSSSRSSADSSSSHPSSSSSSPLSSSPDSSPEEVNGLRGRARVWTRRGGLSSRLREFLSDASALRSQESAADAVEEARARVRLLSRFARSRRQTLEALGGKSRRSEWRRKRTGMMASEARESHRGRDLNTLADREKKALKSALLAAQLSRRRMQSIQSERSLYSLVRPLLDESDAAGVYTANECVAVRYADYPKEFPGYDISTESCRCPDGWLPCAESDAVARMSAWEPVIWEENADEGCTSERGEVMLEHMNFYSCPQRTFVEYTGPRDATIRDKQCKRVAFVLCRAATSSCITGPWSEWTSCSVPCGEGYQYRWRIPVTGASSSTDKGAVTQRSSREACAPYHMEERRKCNLGACPEKITKTTCFWTTVQVDRAEGAFDEDQGSCKCGTGDDAIDREEGAMVPCTPEEAVASMDNWKSHFRQHCYTSLGLRRRSNLALRFHSYGHVVRLGLRDLWHLDCTGGWSKFNIFEAKMFCGVGAKILCRSRTDSAQVPFSMEQHNAESDAVTRISMLLKRQRRVEEASPQAFAEESLLLSEGGVSHLWISLCAGAVAAVVFLVCLTKRAAVGTFLRSRVSTATAGGETVSAKGSTRGSRNAGRRVFSAQAVREAVEERVHAFVAFARRQTTAVILATEKWMETAAEREVTQEMQGVSTASLRLLERDCKEREERDSARKSCPQEAKGLLEGEEDVPALLVFPALKTATDRVVRVARSTLSLETRSFSGAQRSAQRLWGKVRSIFLARGKEKRDEDLFYGEEGERGRIQRGGPAAFVSSLACQKVERRRARRGRREGDSGEGGDCGEARKANSGVAGRLDSLTEMERDDSFVLSAVEEKLLFPRGKRNTQEKLARINKAARTAAVSAVTPESFGSM.

Disordered regions lie at residues 82–101 (SAGF…PCSS), 189–240 (SLEE…SRTR), 298–383 (HTAN…VNGL), and 445–471 (GGKS…SHRG). The segment covering 201-210 (GYEEERERRS) has biased composition (basic and acidic residues). Over residues 315 to 375 (SSRFTSKASS…SSPLSSSPDS (61 aa)) the composition is skewed to low complexity. Positions 638–704 (SCITGPWSEW…RRKCNLGACP (67 aa)) constitute a TSP type-1 domain. A helical membrane pass occupies residues 886 to 906 (GVSHLWISLCAGAVAAVVFLV). The tract at residues 1129–1153 (RRRARRGRREGDSGEGGDCGEARKA) is disordered.

In terms of assembly, component of a complex, at least composed of cysteine repeat modular protein A (CRMPa), cysteine repeat modular protein B (CRMPb), micronemal protein 15 (MIC15) and thrombospondin type 1 domain-containing protein (TSP1).

It is found in the membrane. Its function is as follows. Required for rhoptry secretion. Plays a role in host cell invasion. This Toxoplasma gondii protein is Thrombospondin type 1 domain-containing protein.